Here is a 510-residue protein sequence, read N- to C-terminus: Proline--tRNA ligase 2 (510 aa).

It belongs to the class-II aminoacyl-tRNA synthetase family. ProS type 3 subfamily. In terms of assembly, homodimer.

The protein resides in the cytoplasm. The catalysed reaction is tRNA(Pro) + L-proline + ATP = L-prolyl-tRNA(Pro) + AMP + diphosphate. Catalyzes the attachment of proline to tRNA(Pro) in a two-step reaction: proline is first activated by ATP to form Pro-AMP and then transferred to the acceptor end of tRNA(Pro). The protein is Proline--tRNA ligase 2 of Anaeromyxobacter dehalogenans (strain 2CP-C).